The following is a 496-amino-acid chain: MIPIIALIGRPNVGKSTFFNRLTQTANALVADFPGLTRDRQYGHAEIENHKFIIIDTGGINGIEGIENIQKHMTHQSFLAIEEADVVLFILDARAGLLPADLEIAKHLRKRKKATFLVANKIDGMNSDTALTDFYSLALGKVYGIAASHGRGVAQLMSSVITPFVPEKPIIELSEEELNSSYWEKQKTEVDKTDFLESKKFLCNPESLPIKLAIVGRPNVGKSTLVNHILAQDRMLVYDIPGTTRDSIYIPLIRNNREYIFIDTAGVRKSAKIKEKVERFSVIKTLKAIENANVVLLVIDANEGVSDQDLSLLSFILNSGRSLVITVNKWDAISSEKRKQIKNSLDLRLGFMDFARTHFISALHGSGVENLFKSIKEAYDCSTKRINTSLLTRIMQLAKEEHEPPLVRGRRVKLKYAHSGGYNPLIVVIHGNQVTAINDSYKRYLMNYFRRSLKIIGAPIRIQFKESENPFASKRNTLTPNQVRKRKRLITHLKKR.

2 EngA-type G domains span residues 3–168 (PIIA…VPEK) and 210–383 (IKLA…DCST). GTP-binding positions include 9–16 (GRPNVGKS), 56–60 (DTGGI), 120–123 (NKID), 216–223 (GRPNVGKS), 263–267 (DTAGV), and 328–331 (NKWD). The region spanning 384-468 (KRINTSLLTR…PIRIQFKESE (85 aa)) is the KH-like domain.

Belongs to the TRAFAC class TrmE-Era-EngA-EngB-Septin-like GTPase superfamily. EngA (Der) GTPase family. As to quaternary structure, associates with the 50S ribosomal subunit.

Its function is as follows. GTPase that plays an essential role in the late steps of ribosome biogenesis. The protein is GTPase Der of Hamiltonella defensa subsp. Acyrthosiphon pisum (strain 5AT).